The chain runs to 329 residues: 4-hydroxythreonine-4-phosphate dehydrogenase (329 aa).

Substrate contacts are provided by histidine 136 and threonine 137. 3 residues coordinate a divalent metal cation: histidine 166, histidine 211, and histidine 266. Substrate-binding residues include lysine 274, asparagine 283, and arginine 292.

It belongs to the PdxA family. In terms of assembly, homodimer. Zn(2+) serves as cofactor. Requires Mg(2+) as cofactor. Co(2+) is required as a cofactor.

It localises to the cytoplasm. The catalysed reaction is 4-(phosphooxy)-L-threonine + NAD(+) = 3-amino-2-oxopropyl phosphate + CO2 + NADH. Its pathway is cofactor biosynthesis; pyridoxine 5'-phosphate biosynthesis; pyridoxine 5'-phosphate from D-erythrose 4-phosphate: step 4/5. In terms of biological role, catalyzes the NAD(P)-dependent oxidation of 4-(phosphooxy)-L-threonine (HTP) into 2-amino-3-oxo-4-(phosphooxy)butyric acid which spontaneously decarboxylates to form 3-amino-2-oxopropyl phosphate (AHAP). The chain is 4-hydroxythreonine-4-phosphate dehydrogenase from Pseudomonas syringae pv. tomato (strain ATCC BAA-871 / DC3000).